Reading from the N-terminus, the 1446-residue chain is E3 ubiquitin-protein ligase listerin (1446 aa).

HEAT repeat units follow at residues 71–108 (QTRE…LTTD), 115–153 (MLTM…VTNG), 324–361 (SLQK…LLQK), 363–399 (ENPA…TFSD), 413–450 (EILK…WIIE), 630–669 (AENV…AEDE), 684–721 (GDFE…FCDA), 1046–1083 (LRAL…PAFQ), 1107–1144 (SVAR…KLSL), 1165–1202 (LLDL…NALN), and 1251–1289 (FKSM…RLLI). The segment at 1395 to 1442 (CTICMMTVHQQTHQLPKIKCKQCKNKFHSNCLYKWFESSNQSTCPLCR) adopts an RING-type zinc-finger fold.

It belongs to the LTN1 family. In terms of assembly, component of the ribosome quality control complex (RQC), composed of at least the E3 ubiquitin ligase ltn1 and nemf. The complex probably also contains tcf25 as well as vcp/p97 and its ubiquitin-binding cofactors. RQC forms a stable complex with 60S ribosomal subunits.

The protein localises to the cytoplasm. It is found in the cytosol. It catalyses the reaction S-ubiquitinyl-[E2 ubiquitin-conjugating enzyme]-L-cysteine + [acceptor protein]-L-lysine = [E2 ubiquitin-conjugating enzyme]-L-cysteine + N(6)-ubiquitinyl-[acceptor protein]-L-lysine.. Its pathway is protein modification; protein ubiquitination. In terms of biological role, E3 ubiquitin-protein ligase. Component of the ribosome quality control complex (RQC), a ribosome-associated complex that mediates ubiquitination and extraction of incompletely synthesized nascent chains for proteasomal degradation. Ubiquitination leads to vcp/p97 recruitment for extraction and degradation of the incomplete translation product. The protein is E3 ubiquitin-protein ligase listerin of Caenorhabditis elegans.